The sequence spans 413 residues: Falstatin (413 aa).

Residues 1–21 (MNLLVFFCFFLLSCIVHLSRC) form the signal peptide. Positions 284-294 (LDSVNGNGFVW) match the BC loop; binds and inhibits the active site cavity of cysteine proteases motif. Polar residues-rich tracts occupy residues 325–339 (ISVT…NSNT) and 346–360 (NNKQ…TTNH). The disordered stretch occupies residues 325–367 (ISVTNPVPIPKNSNTNKDDSINNKQDGSQNNTTTNHFPKPREQ).

It belongs to the protease inhibitor I71 family. As to quaternary structure, oligomer; probably composed of 10 monomers. In terms of processing, proteolytically cleaved.

It localises to the secreted. It is found in the cytoplasmic vesicle. The protein localises to the secretory vesicle. The protein resides in the microneme. Its subcellular location is the parasitophorous vacuole lumen. It localises to the host cytoplasm. Cysteine protease inhibitor. Inhibits cysteine protease falcipains FP2 and FP3. Required for the invasion of host erythrocytes by merozoites. In the mosquito vector, essential for the gliding motility of hemocoel sporozoites and, therefore, for salivary gland invasion and the subsequent transmission from the mosquito to the mammalian host. Required for the invasion of host hepatocytes. During the liver stage, may prevent host hepatocyte cell death likely by inhibiting host cysteine proteases. The sequence is that of Falstatin from Plasmodium falciparum (isolate 3D7).